A 646-amino-acid chain; its full sequence is Cell surface glycoprotein MUC18 (646 aa).

An N-terminal signal peptide occupies residues 1–23; sequence MGLPRLVCAFLLAACCCCPRVAG. 2 Ig-like V-type domains span residues 24 to 129 and 139 to 242; these read VPGE…YRIQ and PNIQ…REVT. The Extracellular portion of the chain corresponds to 24-559; that stretch reads VPGEAEQPAP…RKLPEPESRG (536 aa). 4 cysteine pairs are disulfide-bonded: C48–C116, C161–C223, C272–C320, and C365–C407. N-linked (GlcNAc...) asparagine glycosylation occurs at N56. Ig-like C2-type domains lie at 244–330, 335–424, and 430–510; these read PVFY…TMIS, PQEL…QLVN, and PPWM…KNTS. The tract at residues 278-299 is disordered; it reads PPPHFSISKQNPSTREAEEETT. N-linked (GlcNAc...) asparagine glycosylation is found at N418, N449, N467, N508, N518, N527, and N544. C452 and C499 are joined by a disulfide. Positions 525–554 are disordered; it reads DSNTTTGLSTSTASPHTRANSTSTERKLPE. Over residues 533–547 the composition is skewed to polar residues; the sequence is STSTASPHTRANSTS. A helical transmembrane segment spans residues 560 to 583; sequence VVIVAVIVCILVLAVLGAVLYFLY. Over 584-646 the chain is Cytoplasmic; that stretch reads KKGKLPCRRS…QGEKYIDLRH (63 aa). Residues S606, S614, and S628 each carry the phosphoserine modification. Residues 620–646 are disordered; it reads EMGLLQGSSGDKRAPGDQGEKYIDLRH. Residues 629–646 show a composition bias toward basic and acidic residues; that stretch reads GDKRAPGDQGEKYIDLRH.

In terms of tissue distribution, detected in endothelial cells in vascular tissue throughout the body. May appear at the surface of neural crest cells during their embryonic migration. Appears to be limited to vascular smooth muscle in normal adult tissues. Associated with tumor progression and the development of metastasis in human malignant melanoma. Expressed most strongly on metastatic lesions and advanced primary tumors and is only rarely detected in benign melanocytic nevi and thin primary melanomas with a low probability of metastasis.

It localises to the membrane. In terms of biological role, plays a role in cell adhesion, and in cohesion of the endothelial monolayer at intercellular junctions in vascular tissue. Its expression may allow melanoma cells to interact with cellular elements of the vascular system, thereby enhancing hematogeneous tumor spread. Could be an adhesion molecule active in neural crest cells during embryonic development. Acts as a surface receptor that triggers tyrosine phosphorylation of FYN and PTK2/FAK1, and a transient increase in the intracellular calcium concentration. In Homo sapiens (Human), this protein is Cell surface glycoprotein MUC18 (MCAM).